The primary structure comprises 412 residues: MSVALLWVVSPCDVSNGTSFMESVREGNRFFDSSRHRNLVSNERINRGGGKQTNNGRKFSVRSAILATPSGERTMTSEQMVYDVVLRQAALVKRQLRSTNELEVKPDIPIPGNLGLLSEAYDRCGEVCAEYAKTFNLGTMLMTPERRRAIWAIYVWCRRTDELVDGPNASYITPAALDRWENRLEDVFNGRPFDMLDGALSDTVSNFPVDIQPFRDMIEGMRMDLRKSRYKNFDELYLYCYYVAGTVGLMSVPIMGIAPESKATTESVYNAALALGIANQLTNILRDVGEDARRGRVYLPQDELAQAGLSDEDIFAGRVTDKWRIFMKKQIHRARKFFDEAEKGVTELSSASRFPVWASLVLYRKILDEIEANDYNNFTKRAYVSKSKKLIALPIAYAKSLVPPTKTASLQR.

The N-terminal 129 residues, 1–129, are a transit peptide targeting the chloroplast; it reads MSVALLWVVS…AYDRCGEVCA (129 aa).

Belongs to the phytoene/squalene synthase family. As to quaternary structure, monomer. Interacts with SGR1.

It localises to the plastid. The protein localises to the chloroplast. The enzyme catalyses 2 (2E,6E,10E)-geranylgeranyl diphosphate = 15-cis-phytoene + 2 diphosphate. The protein operates within carotenoid biosynthesis; phytoene biosynthesis; all-trans-phytoene from geranylgeranyl diphosphate: step 1/1. Catalyzes the reaction from prephytoene diphosphate to phytoene. The sequence is that of Phytoene synthase 1, chloroplastic (PSY1) from Solanum lycopersicum (Tomato).